The following is a 97-amino-acid chain: Small ribosomal subunit protein uS19 (97 aa).

This sequence belongs to the universal ribosomal protein uS19 family.

Its function is as follows. Protein S19 forms a complex with S13 that binds strongly to the 16S ribosomal RNA. The protein is Small ribosomal subunit protein uS19 of Salinibacter ruber (strain DSM 13855 / M31).